A 325-amino-acid chain; its full sequence is mRNA decay factor CTH1 (325 aa).

C3H1-type zinc fingers lie at residues 204-232 (LYKT…HGLN) and 242-270 (NYRT…HGDD). Positions 284-306 (SKDTALTPLPTSLAPSNNDNITN) are disordered. The segment covering 292 to 306 (LPTSLAPSNNDNITN) has biased composition (polar residues).

In terms of biological role, binds to specific AU-rich elements (ARE) in the 3'-untranslated region of target mRNAs and promotes their degradation. In response to iron deficiency, promotes the decay of many mRNAs encoding proteins involved in iron-dependent pathways. Negatively regulates primarily iron-dependent mitochondrial processes including respiration and amino acid biosynthesis. The chain is mRNA decay factor CTH1 (CTH1) from Saccharomyces cerevisiae (strain ATCC 204508 / S288c) (Baker's yeast).